We begin with the raw amino-acid sequence, 346 residues long: L-glyceraldehyde 3-phosphate reductase (346 aa).

The NADP(+) site is built by tryptophan 33, aspartate 61, tyrosine 66, serine 168, glutamine 193, threonine 223, leucine 225, glutamine 227, lysine 233, serine 303, glutamine 307, and asparagine 311.

It belongs to the shaker potassium channel beta subunit family. Homotetramer. Homooctamer.

It carries out the reaction a primary alcohol + NADP(+) = an aldehyde + NADPH + H(+). It catalyses the reaction hydroxyacetone + NADP(+) = methylglyoxal + NADPH + H(+). Functionally, aldo-keto reductase that catalyzes the stereospecific, NADPH-dependent reduction of L-glyceraldehyde 3-phosphate (L-GAP) to L-glycerol 3-phosphate (L-G3P). The physiological role of Gpr is the detoxification of L-GAP, which may be formed via non-enzymatic and/or enzymatic racemization of D-GAP. Also contributes to cellular methylglyoxal detoxification by catalyzing the NADPH-dependent conversion of methylglyoxal to acetol. However, the catalytic efficiency of methylglyoxal reductase activity is more than 2 orders of magnitude lower than the L-GAP reductase activity. In addition, exhibits activity with glyoxal and probably plays a significant role in detoxification of glyoxal in vivo. Shows broad specificity and can use aromatic aldehydes such as 4-nitrobenzaldehyde and benzaldehyde, D,L-glyceraldehyde, phenylglyoxal, isatin and the model substrate 4-nitrobenzaldehyde. The polypeptide is L-glyceraldehyde 3-phosphate reductase (Escherichia coli (strain K12)).